The sequence spans 181 residues: Adenylyl-sulfate kinase (181 aa).

Glycine 20–serine 27 provides a ligand contact to ATP. Serine 94 functions as the Phosphoserine intermediate in the catalytic mechanism.

Belongs to the APS kinase family.

The enzyme catalyses adenosine 5'-phosphosulfate + ATP = 3'-phosphoadenylyl sulfate + ADP + H(+). The protein operates within sulfur metabolism; hydrogen sulfide biosynthesis; sulfite from sulfate: step 2/3. Functionally, catalyzes the synthesis of activated sulfate. The chain is Adenylyl-sulfate kinase from Deinococcus geothermalis (strain DSM 11300 / CIP 105573 / AG-3a).